A 182-amino-acid polypeptide reads, in one-letter code: Peptidyl-tRNA hydrolase (182 aa).

Y14 contacts tRNA. Catalysis depends on H19, which acts as the Proton acceptor. 3 residues coordinate tRNA: F64, N66, and N112.

This sequence belongs to the PTH family. In terms of assembly, monomer.

Its subcellular location is the cytoplasm. It carries out the reaction an N-acyl-L-alpha-aminoacyl-tRNA + H2O = an N-acyl-L-amino acid + a tRNA + H(+). Its function is as follows. Hydrolyzes ribosome-free peptidyl-tRNAs (with 1 or more amino acids incorporated), which drop off the ribosome during protein synthesis, or as a result of ribosome stalling. In terms of biological role, catalyzes the release of premature peptidyl moieties from peptidyl-tRNA molecules trapped in stalled 50S ribosomal subunits, and thus maintains levels of free tRNAs and 50S ribosomes. The sequence is that of Peptidyl-tRNA hydrolase from Wolbachia pipientis wMel.